Reading from the N-terminus, the 286-residue chain is S-methyl-5'-thioadenosine phosphorylase (286 aa).

Phosphate contacts are provided by residues serine 11, 53-54 (RH), and 86-87 (SA). Position 185 (methionine 185) interacts with substrate. Residue threonine 186 coordinates phosphate. 209-211 (DYD) contributes to the substrate binding site.

It belongs to the PNP/MTAP phosphorylase family. MTAP subfamily. In terms of assembly, homohexamer. Dimer of a homotrimer.

The enzyme catalyses S-methyl-5'-thioadenosine + phosphate = 5-(methylsulfanyl)-alpha-D-ribose 1-phosphate + adenine. Its pathway is amino-acid biosynthesis; L-methionine biosynthesis via salvage pathway; S-methyl-5-thio-alpha-D-ribose 1-phosphate from S-methyl-5'-thioadenosine (phosphorylase route): step 1/1. Its function is as follows. Catalyzes the reversible phosphorylation of S-methyl-5'-thioadenosine (MTA) to adenine and 5-methylthioribose-1-phosphate. Involved in the breakdown of MTA, a major by-product of polyamine biosynthesis. Responsible for the first step in the methionine salvage pathway after MTA has been generated from S-adenosylmethionine. Has broad substrate specificity with 6-aminopurine nucleosides as preferred substrates. The chain is S-methyl-5'-thioadenosine phosphorylase from Geobacter sulfurreducens (strain ATCC 51573 / DSM 12127 / PCA).